The sequence spans 558 residues: Transcription termination factor MTEF18, mitochondrial (558 aa).

A mitochondrion-targeting transit peptide spans 1-58 (MFMVRLKFASISHNFSTVAAKHRRVPSKYKSLAIGKAQQAITDYLHTTRSLSYTHAEQ).

This sequence belongs to the mTERF family.

The protein resides in the mitochondrion. Transcription termination factor involved in the regulation of mitochondrial-encoded gene expression. Essential for normal plant growth and development. This Arabidopsis thaliana (Mouse-ear cress) protein is Transcription termination factor MTEF18, mitochondrial.